The sequence spans 250 residues: 2,3-bisphosphoglycerate-dependent phosphoglycerate mutase (250 aa).

Substrate contacts are provided by residues 10 to 17 (RHGESQWN), 23 to 24 (TG), R62, 89 to 92 (ERHY), K100, 116 to 117 (RR), and 185 to 186 (GN). The active-site Tele-phosphohistidine intermediate is the H11. E89 functions as the Proton donor/acceptor in the catalytic mechanism.

The protein belongs to the phosphoglycerate mutase family. BPG-dependent PGAM subfamily. Homodimer.

The enzyme catalyses (2R)-2-phosphoglycerate = (2R)-3-phosphoglycerate. It participates in carbohydrate degradation; glycolysis; pyruvate from D-glyceraldehyde 3-phosphate: step 3/5. Functionally, catalyzes the interconversion of 2-phosphoglycerate and 3-phosphoglycerate. The chain is 2,3-bisphosphoglycerate-dependent phosphoglycerate mutase from Citrobacter koseri (strain ATCC BAA-895 / CDC 4225-83 / SGSC4696).